The primary structure comprises 31 residues: Kalata-B9 (31 aa).

A cross-link (cyclopeptide (Gly-Asp)) is located at residues 1 to 31 (GSVFNCGETCVLGTCYTPGCTCNTYRVCTKD). Disulfide bonds link C6–C20, C10–C22, and C15–C28.

The protein belongs to the cyclotide family. Bracelet subfamily. This peptide occurs in both cyclic and linear forms.

In terms of biological role, probably participates in a plant defense mechanism. In Oldenlandia affinis, this protein is Kalata-B9.